Consider the following 243-residue polypeptide: Cell division protein ZipA (243 aa).

Over 1 to 4 (MSDM) the chain is Periplasmic. A helical membrane pass occupies residues 5 to 25 (AMIRIGILIAGLLLVAAIFLF). Residues 26–243 (GRPKKSPQGR…APPLTKSPRW (218 aa)) are Cytoplasmic-facing. A disordered region spans residues 30–89 (KSPQGRRVDKGEGQPRERREPVISSEFGAEGDAAERAEGVEQSELNLEGQDASGGNEVGK). A compositionally biased stretch (basic and acidic residues) spans 35-50 (RRVDKGEGQPRERREP).

Belongs to the ZipA family. In terms of assembly, interacts with FtsZ via their C-terminal domains.

Its subcellular location is the cell inner membrane. Its function is as follows. Essential cell division protein that stabilizes the FtsZ protofilaments by cross-linking them and that serves as a cytoplasmic membrane anchor for the Z ring. Also required for the recruitment to the septal ring of downstream cell division proteins. The polypeptide is Cell division protein ZipA (Xanthomonas axonopodis pv. citri (strain 306)).